Here is a 325-residue protein sequence, read N- to C-terminus: 1-aminocyclopropane-1-carboxylate oxidase 2 (325 aa).

The Fe2OG dioxygenase domain occupies proline 157–proline 257. Fe cation-binding residues include histidine 181, aspartate 183, and histidine 238.

It belongs to the iron/ascorbate-dependent oxidoreductase family. Fe cation serves as cofactor.

The catalysed reaction is 1-aminocyclopropane-1-carboxylate + L-ascorbate + O2 = ethene + L-dehydroascorbate + hydrogen cyanide + CO2 + 2 H2O. It functions in the pathway alkene biosynthesis; ethylene biosynthesis via S-adenosyl-L-methionine; ethylene from S-adenosyl-L-methionine: step 2/2. The sequence is that of 1-aminocyclopropane-1-carboxylate oxidase 2 (ACO2) from Doritaenopsis sp. (Moth orchid).